A 246-amino-acid polypeptide reads, in one-letter code: 7-cyano-7-deazaguanine synthase (246 aa).

24–34 (FSGGLDSTTVL) contacts ATP. C209, C219, C222, and C225 together coordinate Zn(2+).

Belongs to the QueC family. Zn(2+) serves as cofactor.

It catalyses the reaction 7-carboxy-7-deazaguanine + NH4(+) + ATP = 7-cyano-7-deazaguanine + ADP + phosphate + H2O + H(+). It functions in the pathway purine metabolism; 7-cyano-7-deazaguanine biosynthesis. Functionally, catalyzes the ATP-dependent conversion of 7-carboxy-7-deazaguanine (CDG) to 7-cyano-7-deazaguanine (preQ(0)). The polypeptide is 7-cyano-7-deazaguanine synthase (Polynucleobacter asymbioticus (strain DSM 18221 / CIP 109841 / QLW-P1DMWA-1) (Polynucleobacter necessarius subsp. asymbioticus)).